Reading from the N-terminus, the 185-residue chain is Prenylated Rab acceptor protein 1 (185 aa).

Residues 1–78 are Cytoplasmic-facing; that stretch reads MAAQKDQQKD…RNVEYYQSNY (78 aa). The interval 30 to 54 is required for interaction with prenylated RAB3A and VAMP2; the sequence is AGREWLERRRATIRPWSTFVDQQRF. The next 2 membrane-spanning stretches (helical) occupy residues 79–94 and 95–112; these read VFVF…VTSP and MLLV…ILYL. The Cytoplasmic portion of the chain corresponds to 113–131; the sequence is RTLESKLVLFGREVSPAHQ. The next 2 helical transmembrane spans lie at 132-148 and 149-165; these read YALA…LAGA and GSAV…VIGS. A required for interaction with GDI1 region spans residues 165–185; that stretch reads SHAAFHQIEAVDGEELQMEPV. At 166–185 the chain is on the cytoplasmic side; it reads HAAFHQIEAVDGEELQMEPV. The segment at 175–185 is required for interaction with prenylated RAB3A and VAMP2; the sequence is VDGEELQMEPV. Residues 175–185 are homodimerization; it reads VDGEELQMEPV.

Belongs to the PRA1 family. Homodimer. Interacts with VAMP2 (synaptobrevin-2), GDI1, and PCLO. Interacts specifically with prenylated Rab proteins; strongly with RAB4B, RAB5A and RAB5C, and weakly with RAB4A, RAB6, RAB7A, RAB17 and RAB22. Interacts with NDRG1. In terms of tissue distribution, ubiquitous. Strongest expression found in placenta, pituitary gland, kidney, lung and stomach.

The protein resides in the cell membrane. Its subcellular location is the cytoplasm. The protein localises to the golgi apparatus. It is found in the cytoplasmic vesicle. It localises to the secretory vesicle. The protein resides in the synaptic vesicle. General Rab protein regulator required for vesicle formation from the Golgi complex. May control vesicle docking and fusion by mediating the action of Rab GTPases to the SNARE complexes. In addition it inhibits the removal of Rab GTPases from the membrane by GDI. The polypeptide is Prenylated Rab acceptor protein 1 (RABAC1) (Homo sapiens (Human)).